Consider the following 807-residue polypeptide: Glycerol-3-phosphate acyltransferase (807 aa).

The HXXXXD motif signature appears at 308–313 (CHRSHM).

The protein belongs to the GPAT/DAPAT family.

It localises to the cell inner membrane. The enzyme catalyses sn-glycerol 3-phosphate + an acyl-CoA = a 1-acyl-sn-glycero-3-phosphate + CoA. Its pathway is phospholipid metabolism; CDP-diacylglycerol biosynthesis; CDP-diacylglycerol from sn-glycerol 3-phosphate: step 1/3. The protein is Glycerol-3-phosphate acyltransferase of Shewanella denitrificans (strain OS217 / ATCC BAA-1090 / DSM 15013).